The sequence spans 414 residues: Histidine--tRNA ligase (414 aa).

It belongs to the class-II aminoacyl-tRNA synthetase family. In terms of assembly, homodimer.

The protein resides in the cytoplasm. The catalysed reaction is tRNA(His) + L-histidine + ATP = L-histidyl-tRNA(His) + AMP + diphosphate + H(+). This is Histidine--tRNA ligase from Rickettsia rickettsii (strain Iowa).